We begin with the raw amino-acid sequence, 275 residues long: COP9 signalosome complex subunit 7a (275 aa).

Serine 2 bears the N-acetylserine mark. One can recognise a PCI domain in the interval 2–159; it reads SAEVKVTGQN…QRLEVDYSIG (158 aa). Residues 185–233 adopt a coiled-coil conformation; that stretch reads LSGIEEQVSRANQHKEQQLGLKQQIESEVANLKKTIKVTTAAAAAATSQ. Positions 227–275 are disordered; that stretch reads AAAATSQDPEQHLTELREPAPGTNQRQPSKKASKGKGLRGSAKIWSKSN. Residues 235–244 are compositionally biased toward basic and acidic residues; the sequence is PEQHLTELRE. Positions 254–263 are enriched in basic residues; sequence PSKKASKGKG.

Belongs to the CSN7/EIF3M family. CSN7 subfamily. In terms of assembly, component of the CSN complex, composed of COPS1/GPS1, COPS2, COPS3, COPS4, COPS5, COPS6, COPS7 (COPS7A or COPS7B), COPS8 and COPS9. In the complex, it probably interacts directly with COPS1, COPS2, COPS4, COPS5, COPS6 and COPS8. Interacts with PMF1. Interacts with the translation initiation factor EIF3S6. Interacts with CK2 and PKD. Interacts directly with ID3. Phosphorylated by CK2 and PKD kinases.

The protein resides in the cytoplasm. The protein localises to the nucleus. Component of the COP9 signalosome complex (CSN), a complex involved in various cellular and developmental processes. The CSN complex is an essential regulator of the ubiquitin (Ubl) conjugation pathway by mediating the deneddylation of the cullin subunits of SCF-type E3 ligase complexes, leading to decrease the Ubl ligase activity of SCF-type complexes such as SCF, CSA or DDB2. The complex is also involved in phosphorylation of p53/TP53, JUN, I-kappa-B-alpha/NFKBIA, ITPK1 and IRF8/ICSBP, possibly via its association with CK2 and PKD kinases. CSN-dependent phosphorylation of TP53 and JUN promotes and protects degradation by the Ubl system, respectively. The protein is COP9 signalosome complex subunit 7a (COPS7A) of Pongo abelii (Sumatran orangutan).